A 1905-amino-acid polypeptide reads, in one-letter code: Transport and Golgi organization protein 1 homolog (1905 aa).

The N-terminal stretch at 1 to 22 is a signal peptide; sequence MAAAQGLLFWLLLLGPPCRVPG. Residues 23–1141 lie on the Lumenal side of the membrane; sequence QPEQDPGRRF…EPASVTPLEN (1119 aa). Positions 45 to 107 constitute an SH3 domain; that stretch reads MLMYRGEALE…PKDLIQVVHE (63 aa). Residues 154–167 are compositionally biased toward basic and acidic residues; it reads SEKVKEKTAQRVEE. 2 disordered regions span residues 154–259 and 313–621; these read SEKV…HEQE and TVGK…IKDR. An N-linked (GlcNAc...) asparagine glycan is attached at N173. The span at 173-190 shows a compositional bias: acidic residues; that stretch reads NESDAEPEPGEPNSEESE. The span at 198–208 shows a compositional bias: basic and acidic residues; that stretch reads AELRERSEAQK. The segment covering 209–220 has biased composition (polar residues); the sequence is SHPQVNSQTGHA. Phosphoserine is present on residues S226 and S229. The span at 234–245 shows a compositional bias: basic and acidic residues; sequence LQDKLKVPDSEN. N246 carries an N-linked (GlcNAc...) asparagine glycan. The span at 246 to 255 shows a compositional bias: polar residues; that stretch reads NKTSNSSQVS. Residues 317 to 327 are compositionally biased toward acidic residues; it reads EEEENKEDFDE. Basic and acidic residues-rich tracts occupy residues 337–366 and 373–386; these read EDTK…KVEE and KKGD…REDT. Over residues 392–414 the composition is skewed to acidic residues; the sequence is MEGEENTDTDLESSDSKEEDDPL. Basic and acidic residues-rich tracts occupy residues 419 to 436 and 459 to 480; these read RLGK…KAAD and HMKD…HEVG. Positions 467–527 form a coiled coil; the sequence is VEEPRRDWVQ…ANQENDLKGA (61 aa). The segment covering 488–500 has biased composition (polar residues); that stretch reads DQAVQGSSQSGHL. Residues 531–542 show a composition bias toward basic and acidic residues; the sequence is ISKEMLHEEKPS. Residue N627 is glycosylated (N-linked (GlcNAc...) asparagine). 3 disordered regions span residues 657 to 908, 1036 to 1059, and 1085 to 1118; these read QQGG…PHAP, APPA…QPPL, and PVTR…TPVD. Basic and acidic residues predominate over residues 669–714; the sequence is VSEKRELPEEEVTRVTKDASDEGQEVRKTGQTDSIEGRGFRPKEPN. The span at 715 to 730 shows a compositional bias: acidic residues; that stretch reads PEDEDYSPEELLEDEN. 4 stretches are compositionally biased toward basic and acidic residues: residues 736 to 751, 766 to 789, 842 to 859, and 868 to 884; these read QSKE…RLDV, TDPE…KNET, SQKK…EGHP, and PGVE…EKFV. At S873 the chain carries Phosphoserine. The stretch at 1142–1162 is an intramembrane region; it reads AIAFIYSLVFHLTKTLLATLP. The Lumenal segment spans residues 1163 to 1173; it reads DDVQPGPDFYG. A helical transmembrane segment spans residues 1174 to 1194; sequence LPWKPVLITASLGIVSFAVFF. Over 1195–1905 the chain is Cytoplasmic; the sequence is WRTVLAVKSR…DCSPALKQSP (711 aa). The mediates interaction with MIA2 stretch occupies residues 1208-1647; that stretch reads VTEQQISEKL…VIVKPMPGRP (440 aa). Positions 1211-1393 form a coiled coil; sequence QQISEKLKNI…SQKDLEVALT (183 aa). The interval 1416-1443 is disordered; it reads SESEDQNKGGSESDELANGEVGGDRSEK. Position 1428 is a phosphoserine (S1428). The stretch at 1484 to 1636 forms a coiled coil; it reads NLEDQIKKLE…TQKMAMMQEE (153 aa). The tract at residues 1639–1905 is disordered; that stretch reads IVKPMPGRPN…DCSPALKQSP (267 aa). The span at 1647–1664 shows a compositional bias: polar residues; sequence PNTQNPPRRGPLSQNGSF. Residues S1663, S1675, S1703, S1724, S1738, and S1742 each carry the phosphoserine modification. Residues 1748-1905 form a proline-rich domain (PRD); mediates interaction with the COPII coat subunits SEC23A and SEC23B region; that stretch reads DEGKVSMAAK…DCSPALKQSP (158 aa). Positions 1776–1806 are enriched in pro residues; sequence LLPPIRYGPPPQLCGPFGPRPLPPPFGPGMR. R1781 carries the asymmetric dimethylarginine modification. The interval 1785–1845 is SEC16A-interacting region (SIR); required for its localization to endoplasmic reticulum exit sites and for its interaction with SEC16A; the sequence is PPQLCGPFGP…GHAPFRPLGS (61 aa). Over residues 1821–1831 the composition is skewed to basic and acidic residues; sequence GKRDLPLDPRE. 2 positions are modified to phosphoserine: S1890 and S1904. Residues 1891-1905 show a composition bias toward polar residues; it reads QGASQDCSPALKQSP.

It belongs to the MIA/OTOR family. Tango1 subfamily. Interacts with MIA2. Interacts (via SH3 domain) with COL7A1. Interacts with the COPII coat subunits SEC23A, SEC23B and maybe SEC24C. May interact with APOB and MIA2. Interacts with SEC16A.

Its subcellular location is the endoplasmic reticulum membrane. Plays a role in the transport of cargos that are too large to fit into COPII-coated vesicles and require specific mechanisms to be incorporated into membrane-bound carriers and exported from the endoplasmic reticulum. This protein is required for collagen VII (COL7A1) secretion by loading COL7A1 into transport carriers. It may participate in cargo loading of COL7A1 at endoplasmic reticulum exit sites by binding to COPII coat subunits Sec23/24 and guiding SH3-bound COL7A1 into a growing carrier. Does not play a role in global protein secretion and is apparently specific to COL7A1 cargo loading. However, it may participate in secretion of other proteins in cells that do not secrete COL7A1. It is also specifically required for the secretion of lipoproteins by participating in their export from the endoplasmic reticulum. Required for correct assembly of COPII coat components at endoplasmic reticulum exit sites (ERES) and for the localization of SEC16A and membrane-bound ER-resident complexes consisting of MIA2 and PREB/SEC12 to ERES. The sequence is that of Transport and Golgi organization protein 1 homolog from Bos taurus (Bovine).